Here is a 476-residue protein sequence, read N- to C-terminus: Major facilitator superfamily domain-containing protein 12 (476 aa).

Met1 is modified (N-acetylmethionine). Over 1-25 (MSPPSDDAGPGPPRTLSLAARLSFA) the chain is Cytoplasmic. Residues 26–46 (VGHFLNDLCAGMWFTYLLLFL) form a helical membrane-spanning segment. The Lumenal portion of the chain corresponds to 47-55 (HSVRGYSSR). The helical transmembrane segment at 56–76 (GAGLLLLLGQVADGLCTPLVG) threads the bilayer. Residues 77–94 (YEADRASCVRCGPRKAWH) are Cytoplasmic-facing. Residues 95-115 (LAGTVCVLLSFPFIFSPCLGC) traverse the membrane as a helical segment. Residues 116–121 (GEATPE) are Lumenal-facing. A helical membrane pass occupies residues 122 to 142 (WAALLYYGPFIVVFQFGWAAT). The Cytoplasmic portion of the chain corresponds to 143–167 (QIAHLSLIPELVTSDHEKVELTALR). Residues 168-188 (YAFTVVANITVYGAAWLLLHL) form a helical membrane-spanning segment. Residues 189-213 (QGSAHGEQDISVGDQLGVQDVPVFR) lie on the Lumenal side of the membrane. Residues 214-234 (NLALLVVGVGAIFSLLFHLGT) form a helical membrane-spanning segment. The Cytoplasmic portion of the chain corresponds to 235–284 (KEGHRSQHWGNEPNEHTPLVAPAAQPLLLWKHWLREPAFYQVGMLYMTTR). Position 251 is a phosphothreonine (Thr251). A helical membrane pass occupies residues 285–305 (LIVNLSQTYIAMYLTYSLSLP). Position 306 (Lys306) is a topological domain, lumenal. Residues 307-327 (KFIATIPLVMYLSGFFSSFLM) form a helical membrane-spanning segment. The Cytoplasmic portion of the chain corresponds to 328 to 343 (KPVNRRIGRNMTYFTG). A run of 2 helical transmembrane segments spans residues 344–364 (LLVI…GVAV) and 365–385 (YGAA…SLAM). Residues 386–398 (TADLIGPHTHSGA) lie on the Cytoplasmic side of the membrane. The chain crosses the membrane as a helical span at residues 399–419 (FVYGAMSFSDKVANGLAVMAV). The Lumenal segment spans residues 420 to 444 (QSLHPCPSELCCGACISFYHWVMTA). Residues 445-465 (VTGGVGVAAALALCSLLIWPI) form a helical membrane-spanning segment. Over 466 to 476 (RIRNRDPRDRP) the chain is Cytoplasmic.

This sequence belongs to the major facilitator superfamily. Post-translationally, phosphorylation at Thr-251 by MTOR via mTORC1 pathway promotes cysteine transport in lysosomes, thereby regulating lysosomal cysteine and cystine storage and redox homeostasis.

It is found in the melanosome membrane. It localises to the lysosome membrane. The enzyme catalyses L-cysteine(in) = L-cysteine(out). Transporter that mediates the import of cysteine into melanosomes, thereby regulating skin/hair pigmentation. In melanosomes, cysteine import is required both for normal levels of cystine, the oxidized dimer of cysteine, and provide cysteine for the production of the cysteinyldopas used in pheomelanin synthesis, thereby regulating skin/hair pigmentation. Also catalyzes import of cysteine into lysosomes in non-pigmented cells, regulating lysosomal cystine and cysteine storage, which is essnetial for redox homeostasis. The polypeptide is Major facilitator superfamily domain-containing protein 12 (Mus musculus (Mouse)).